The primary structure comprises 456 residues: Alcohol acyltransferase 1 (456 aa).

Catalysis depends on proton acceptor residues H166 and D382.

Belongs to the plant acyltransferase family. As to expression, expressed in fruit.

It catalyses the reaction 3-(methylsulfanyl)propanoyl-CoA + butan-1-ol = butyl 3-(methylsulfanyl)propanoate + CoA. The enzyme catalyses ethanol + benzoyl-CoA = ethyl benzoate + CoA. It carries out the reaction butan-1-ol + benzoyl-CoA = butyl benzoate + CoA. The catalysed reaction is 2-(methylsulfanyl)acetyl-CoA + butan-1-ol = butyl 2-(methylsulfanyl)acetate + CoA. In terms of biological role, involved in the biosynthesis of volatile esters which confer kiwifruit flavor. Alcohol acyl transferase that can use a wide range of alcohols as substrate to produce esters. Exhibits benzoyl-CoA:alcohol O-acyltransferase activity. The sequence is that of Alcohol acyltransferase 1 from Actinidia deliciosa (Kiwi).